Consider the following 2349-residue polypeptide: Reducing polyketide synthase hmp8 (2349 aa).

The region spanning 9-435 (HVPVAIIGLA…GTNGHVVLEA (427 aa)) is the Ketosynthase family 3 (KS3) domain. Active-site for beta-ketoacyl synthase activity residues include Cys-182, His-317, and His-357. The segment at 551 to 856 (FVFTGQGAQW…SHNGIKNVAY (306 aa)) is malonyl-CoA:ACP transacylase (MAT) domain. The segment at 930-1066 (RSLIGAPVPM…GLVAIDYEES (137 aa)) is N-terminal hotdog fold. The region spanning 930–1250 (RSLIGAPVPM…TSELDMDSGK (321 aa)) is the PKS/mFAS DH domain. A dehydratase (DH) domain region spans residues 932 to 1244 (LIGAPVPMMA…SVKDFRTSEL (313 aa)). His-962 functions as the Proton acceptor; for dehydratase activity in the catalytic mechanism. The tract at residues 1094–1250 (PEHYAHDKFY…TSELDMDSGK (157 aa)) is C-terminal hotdog fold. Asp-1160 functions as the Proton donor; for dehydratase activity in the catalytic mechanism. The enoyl reductase (ER) domain stretch occupies residues 1641-1953 (GLLDTLKFVP…QGKHRGKMVL (313 aa)). Residues 1977 to 2157 (ATYLFVGGLG…ISVNLGIMRD (181 aa)) are ketoreductase (KR) domain. The region spanning 2267-2344 (EAAEIITDAL…SFAVKIAEKS (78 aa)) is the Carrier domain. Ser-2304 is subject to O-(pantetheine 4'-phosphoryl)serine.

The protein operates within secondary metabolite biosynthesis. In terms of biological role, reducing polyketide synthase; part of the gene cluster that mediates the biosynthesis of hypothemycin, a resorcylic acid lactone (RAL) that irreversibly inhibits a subset of protein kinases with a conserved cysteine in the ATP binding site such as human ERK2. The first step is performed by both PKSs hmp3 and hmp8 and leads to the production of 7',8'-dehydrozearalenol (DHZ). The highly reducing PKS hpm8 synthesizes the reduced hexaketide (7S,11S,2E,8E)-7,11-dihydroxy-dodeca-2,8-dienoate, which is transferred downstream to the non-reducing PKS hpm3. Hpm3 then extends the reduced hexaketide to a nonaketide, after which regioselective cyclization and macrolactonization affords DHZ. The next step is the conversion of DHZ into aigialomycin C and is performed by the O-methyltransferase hmp5, the FAD-binding monooxygenase hmp7, and the cytochrome P450 monooxygenase hmp1. The wide substrate tolerance of the hmp5 and hmp7 implies that the reactions from DHZ to aigialomycin C can occur in any order. The steps from aigialomycin C to hypothemycin are less well established. The FAD-linked oxidoreductase hmp9 presumably catalyzes oxidation of the C-6' hydroxyl to a ketone. The timing of this oxidation is important, since the resulting enone functional group is a Michael acceptor that can react spontaneously with glutathione, an abundant metabolite in fungal cells. The glutathione S-transferase hmp2 catalyzes cis-trans isomerization of the 7',8' double bond with equilibrium favoring the trans isomer. The hpm6-encoded transporter might preferentially pump hypothemycin out of the cell relative to the trans isomer aigialomycin A. The cis-to-trans isomerization may be coupled with C-4' hydroxylation, since all known hypothemycin analogs containing the enone functional group also have hydroxyl groups at both C-4' and C-5'. In Hypomyces subiculosus (Nectria subiculosa), this protein is Reducing polyketide synthase hmp8.